We begin with the raw amino-acid sequence, 314 residues long: 4-hydroxy-3-methylbut-2-enyl diphosphate reductase (314 aa).

Residue C12 coordinates [4Fe-4S] cluster. The (2E)-4-hydroxy-3-methylbut-2-enyl diphosphate site is built by H41 and H74. 2 residues coordinate dimethylallyl diphosphate: H41 and H74. 2 residues coordinate isopentenyl diphosphate: H41 and H74. A [4Fe-4S] cluster-binding site is contributed by C96. Residue H124 coordinates (2E)-4-hydroxy-3-methylbut-2-enyl diphosphate. Residue H124 participates in dimethylallyl diphosphate binding. H124 lines the isopentenyl diphosphate pocket. E126 functions as the Proton donor in the catalytic mechanism. T167 lines the (2E)-4-hydroxy-3-methylbut-2-enyl diphosphate pocket. Position 197 (C197) interacts with [4Fe-4S] cluster. The (2E)-4-hydroxy-3-methylbut-2-enyl diphosphate site is built by S225, S226, N227, and S269. 4 residues coordinate dimethylallyl diphosphate: S225, S226, N227, and S269. Positions 225, 226, 227, and 269 each coordinate isopentenyl diphosphate.

This sequence belongs to the IspH family. It depends on [4Fe-4S] cluster as a cofactor.

It carries out the reaction isopentenyl diphosphate + 2 oxidized [2Fe-2S]-[ferredoxin] + H2O = (2E)-4-hydroxy-3-methylbut-2-enyl diphosphate + 2 reduced [2Fe-2S]-[ferredoxin] + 2 H(+). It catalyses the reaction dimethylallyl diphosphate + 2 oxidized [2Fe-2S]-[ferredoxin] + H2O = (2E)-4-hydroxy-3-methylbut-2-enyl diphosphate + 2 reduced [2Fe-2S]-[ferredoxin] + 2 H(+). Its pathway is isoprenoid biosynthesis; dimethylallyl diphosphate biosynthesis; dimethylallyl diphosphate from (2E)-4-hydroxy-3-methylbutenyl diphosphate: step 1/1. It functions in the pathway isoprenoid biosynthesis; isopentenyl diphosphate biosynthesis via DXP pathway; isopentenyl diphosphate from 1-deoxy-D-xylulose 5-phosphate: step 6/6. Functionally, catalyzes the conversion of 1-hydroxy-2-methyl-2-(E)-butenyl 4-diphosphate (HMBPP) into a mixture of isopentenyl diphosphate (IPP) and dimethylallyl diphosphate (DMAPP). Acts in the terminal step of the DOXP/MEP pathway for isoprenoid precursor biosynthesis. The chain is 4-hydroxy-3-methylbut-2-enyl diphosphate reductase from Haemophilus influenzae (strain PittGG).